The sequence spans 205 residues: Thymidylate kinase (205 aa).

Position 11-18 (11-18 (GVEGSGKS)) interacts with ATP.

Belongs to the thymidylate kinase family.

It carries out the reaction dTMP + ATP = dTDP + ADP. In terms of biological role, phosphorylation of dTMP to form dTDP in both de novo and salvage pathways of dTTP synthesis. In Ruthia magnifica subsp. Calyptogena magnifica, this protein is Thymidylate kinase.